A 165-amino-acid polypeptide reads, in one-letter code: uncharacterized protein (165 aa).

In terms of domain architecture, N-acetyltransferase spans 8–159 (LLVNYKTLEE…QGVQEQTTKP (152 aa)).

This is an uncharacterized protein from Shouchella clausii (strain KSM-K16) (Alkalihalobacillus clausii).